A 2599-amino-acid polypeptide reads, in one-letter code: MVTTTRATNPTNTLLLFGPQALSFSTATFADIHARVVQTSENAWIKQTITSLPGLWDALVKEFPQYGALEGKQLLRDLDRWFETGTMEHAEPHLPNILLSPMVVITQLTEYVDYLKTMPHAADQQTETVGFCTGLLTALAASLAPDIKGIRQYGAIAIKLAMIIGGVVDVQDITSPNGPSKSLAVAWDSAETQDRLNQIIDQSPEAYISVEYDHNRATITTAARSISSLQQRLRNAGLIASQIGLRGRFHCACYEKDIEALSKFCDSVPSLCLPDAAVLALPTRSNDAGSFILSGKLHHCALRSILLDTSHWYQTLEVVRQSFLKSPSSMVVSFGPERCIPPSILKGLSSIVTTAAEYQPSYLHRDPELCNPNEIAVIGMSCKVAGADDVDEFWDLLCKAESQHQEVPKERFGFESAFREVDPTRKWYGNFINEHDCFDHKFFKKSAREIAATDPQQRQMLQVAYQAVEQSGYFTTPKSDKDRKIGCYIGVCAADYEYNVACHPPNAFMATGNLKSFVAGKISHWFGWTGPGLCIDTACSSSLVAVHQACQAILTGDCTAALAGGANIITHPLWYQNLAAASFLSPTGQCKPFDASADGYCRGEGFAAVFLKKMSAAIADGDMIIGSIKATAVNQNQNCTPVFVPNAPTLSDLFRDVLDRSQLTANQITVVEAHGTGTQVGDPAEYESIRNVLGGPSRSTPLLFGSVKGLVGHTECTSGAVSLVKTLLMQQHEAIPPQPSFDRLNPEIPVSESDNMQIATRFSPWTAEYRAALINNYGACGSNASMVVAQAPRTEQKRSATRRTSVVLDYPFRLCGSDDRALRAYSERLVRFIASGIKDGISVADLAFNVCRQSNPTLDRSLAFACRTTQEVEEKLRAFVAGNQGLISASRSKTPREVILCFGGQISNYVGLDREVYDNVALLRKHLAICDAACRDLGVDSIFPGIFQKSPISDPVKLQTILFSTQYSSAKAWMDSGVRPVAAVGHSFGELTALCVTGILSLADAMKMIVGRATVIRDFWGEDKGSMIAVEADENRVQRLLAEAAKQCELIHVRAPTIACVNGPTSYTLAGPVKSIDIVTEVISRLSDSGPSIRSKRLKVTNAFHSTLVEPLMEELEKVGQQLTFNAPTIQLERAIEHHSDATLTSDYVPDHMRNPVYFNQAVQRLAQQYPDSVWLEAGSNSTITSMASRALGSPKSLHFQAVNITSDDSWSMLITSTLSLWKQGISTNFWAYHAKQTYEYNPVLLPPYQFEPSRHWMELKVPSFMSNGNVQCGPRDEEEPPKTLWSLIEASDKVARFQINTAAPKYVELVSGHVIANTAPICPATVEVDIVVEALRSLRPDFMDSNLQPQVLAVTNQSPICIDPNRSVWLECQAMDSNLVWEWRIVSDSLQEPGTSSSAHVLGKLAFLSGQDEVKQQESEFMRLERLIGHQRCVDLLNTTEADDIIQGRNIYTTFAGVVDYGEQYRGLKKIVGKGLESAGRVQKKPSEESWLDAHLGDCFSQVGGIWVNCMTDHNPDEMFIATGFEKWVRSPALRHGQPRPEIWDVLACHHRSSEQTYLTDIFIFDAEQGALTEVILGINYHKVAKASMSKILSRLSGTEAAPSSSTRAHPTSSSSPRLPGPFVPEDKSQNETQTAGTNAVAKKKSEKSAQQNVLDKTRALLAEISGLEPSEIEAETGLADIGIDSLMGMELARDLEALFKCPLLGDELANVTTFQGLVEYVQSAVGVPANGDEPDNTNADEVFEEDNLAASPSSSSSSTNLTEDSSLDPTETTTNISSYPELSPAWVLEAFEESKQLTDHFIEQYRCANYVDTILPKQTQLCVALTVEAFEKLGCPIRSAVAGQKLERILHIPKHAQLAQYLYRLLSADARLINLTEDGRITRTHMALPKPSDQILQDLLRLYPDHEWANRLAAFTGARLAEVLKGETDGLGLIFGTDEGRELVAGLYGDSLLNKLSYRQMEDIITRLASRIPRDSGPLKILEMGAGTGGTTRGMAPLLARLGIPVEYTFTDLSGSFVAAARKKYQKEYPFMKFQVHDIEKPPSDQLRHSQHIVIASNAIHATHSLTDSSRHVREFLKTDGFLMIVEMTQPVHWVDIIFGLFDGWWLFADGRDHAIASAGWWEKVFQSVGYGQVDWTDGHRPEVQIQRVIIALASGPRYGRQPLPPAPPPNLVPGSHASRQAAVNEYLDKYTKGFTLPAQTSNTDISNSTSYWEKQCVLITGATGSLGVHLVAAVAALDDVQTVICLNRRSPMDPDLRQQQAFERRGILLEAASMSKIRVLQTDSSKPQLGLTDEVYSSLVTSTTHIIHNAWPMTGKRPLSGLEQQFLVMRNLLDLAAQCSSTRPANAPRIVFQFISSIATVGYYPLWSGQTLVPEARMGIESVLANGYGEAKYVCEQMLDRTLHQYPDRFRAMAVRLGQIAGSRTSGYWNPMEHLSFLFKSAQTLQVFPDFTGDLCWTPVNDVAATLSDLLLRSTHSNSTTDQPIYHIDNPVRQSWSEMVPVLIDALGIPAQNVIPFADWVCRVRAFPGQVEWDNPSALLIDFLDDHFLRMSCGGLLLDTKRACEHSPTLAAVGPVTAELARKYIQSWKEMGFLNP.

Residues 95–231 (PNILLSPMVV…AARSISSLQQ (137 aa)) are N-terminal acylcarrier protein transacylase domain (SAT). The active-site Nucleophile; for transacylase activity is Cys132. His250 serves as the catalytic Proton donor/acceptor; for transacylase activity. The Ketosynthase family 3 (KS3) domain occupies 372 to 790 (PNEIAVIGMS…GSNASMVVAQ (419 aa)). Active-site for beta-ketoacyl synthase activity residues include Cys539, His674, and His713. The segment at 902–1193 (FGGQISNYVG…ITSMASRALG (292 aa)) is malonyl-CoA:ACP transacylase (MAT) domain. An N-terminal hotdog fold region spans residues 1282 to 1413 (PKTLWSLIEA…GKLAFLSGQD (132 aa)). In terms of domain architecture, PKS/mFAS DH spans 1282 to 1591 (PKTLWSLIEA…YHKVAKASMS (310 aa)). Residues 1310–1589 (LVSGHVIANT…INYHKVAKAS (280 aa)) form a product template (PT) domain region. His1314 functions as the Proton acceptor; for dehydratase activity in the catalytic mechanism. The C-terminal hotdog fold stretch occupies residues 1443–1591 (ADDIIQGRNI…YHKVAKASMS (149 aa)). Asp1499 acts as the Proton donor; for dehydratase activity in catalysis. The segment at 1601–1652 (EAAPSSSTRAHPTSSSSPRLPGPFVPEDKSQNETQTAGTNAVAKKKSEKSAQ) is disordered. Residues 1602–1619 (AAPSSSTRAHPTSSSSPR) are compositionally biased toward low complexity. The region spanning 1653–1727 (QNVLDKTRAL…GLVEYVQSAV (75 aa)) is the Carrier domain. Residue Ser1687 is modified to O-(pantetheine 4'-phosphoryl)serine. The interval 1749 to 1779 (NLAASPSSSSSSTNLTEDSSLDPTETTTNIS) is disordered. Residues 1750–1766 (LAASPSSSSSSTNLTED) show a composition bias toward low complexity. The segment covering 1769-1779 (LDPTETTTNIS) has biased composition (polar residues). Residues 1952–2140 (DSLLNKLSYR…VGYGQVDWTD (189 aa)) are methyltransferase domain. The NADPH-binding (R) domain stretch occupies residues 2222–2467 (ITGATGSLGV…LCWTPVNDVA (246 aa)).

Pantetheine 4'-phosphate serves as cofactor.

It functions in the pathway secondary metabolite biosynthesis. In terms of biological role, non-reducing polyketide synthase; part of the gene cluster that mediates the biosynthesis of azaphilones, a class of fungal metabolites characterized by a highly oxygenated pyrano-quinone bicyclic core and exhibiting a broad range of bioactivities. In the first step, the non-reducing polyketide synthase azaA forms the hexaketide precursor from successive condensations of five malonyl-CoA units, presumably with a simple acetyl-CoA starter unit. The reactive polyketide chain then undergoes a PT-mediated C2-C7 cyclization to afford the aromatic ring and is eventually released as an aldehyde through the R-domain. The putative ketoreductase azaE is proposed to catalyze the reduction of the terminal ketone resulting in the early culture product FK17-P2a. The monooxygenase azaH was demonstrated to be the only enzyme required to convert FK17-P2a to azanigerone E. AzaH first hydroxylates the benzaldehyde intermediate FK17-P2a at C4, which triggers the formation of the pyran-ring to afford azanigerone E. In parallel, the 2,4-dimethylhexanoyl chain is synthesized by the HR-PKS azaB and is proposed to be transferred to the C4-hydroxyl of azanigerone E by the acyltransferase azaD directly from the ACP domain of azaB. Alternatively, the 2,4-dimethyl-hexanoyl chain may be offloaded from the HR-PKS as a carboxylic acid and converted to an acyl-CoA by azaF. The resulting acyl-CoA molecule could then be taken up as a substrate by AzaD to form azanigerone B. To yield the carboxylic acid substituent in azanigerone A, the hydroxypropyl side chain of azanigerone B would need to undergo a C-C oxidative cleavage catalyzed by cytochrome P450 AzaI. AzaI is proposed to act on a vicinal diol that leads to a C-C bond scission either through an alkoxyradical intermediate or a peroxy complex. In the biosynthesis of azanigerone A, azanigerone B first undergoes hydroxylation at C10, possibly catalyzed by one of the two FAD-dependent monooxygenases encoded in the cluster, azaG or azaL, resulting in the vicinal diol azanigerone C. Oxidative cleavage of azanigerone C by azaI would yield the corresponding aldehyde derivative of azanigerone A. Finally, the dehydrogenase azaJ is proposed to convert the aldehyde functional group into the carboxylic acid, completing the conversion from azanigerone B to azanigerone A. Alternatively, the oxidation of aldehyde to carboxylic acid may be catalyzed by the same P450 enzyme azaI via consecutive oxidation or by endogenous alcohol dehydrogenase. The chain is Non-reducing polyketide synthase azaA from Aspergillus niger (strain ATCC 1015 / CBS 113.46 / FGSC A1144 / LSHB Ac4 / NCTC 3858a / NRRL 328 / USDA 3528.7).